Consider the following 228-residue polypeptide: Leucokinins (228 aa).

The first 18 residues, 1-18, serve as a signal peptide directing secretion; the sequence is MAMLLQVALPLLAAVSWG. The propeptide occupies 19-164; that stretch reads WELNENDDSL…PRFSPVSAIQ (146 aa). Residues 80-118 are disordered; it reads EFSENNEAEDKSPTSAQNTQEHIPGNNFPPPAASNPPVN. Glycine amide is present on residues G180 and G193. The propeptide occupies 197-209; that stretch reads NTGRVHRQPKVVI. At G217 the chain carries Glycine amide. Residues 221-228 constitute a propeptide that is removed on maturation; that stretch reads NQKDDNVF.

It localises to the secreted. Its function is as follows. Stimulates both fluid secretion by the Malpighian tubules and hindgut contractions. Depolarize the transepithelial voltage of the Malpighian tubules in concentrations of less than 10(-9) M and increase the frequency of hindgut contractions at concentrations above 10(-8) M. The chain is Leucokinins from Aedes aegypti (Yellowfever mosquito).